Here is a 320-residue protein sequence, read N- to C-terminus: Short-chain dehydrogenase TIC 32 B, chloroplastic (320 aa).

NADP(+) contacts are provided by residues 40-46, 92-93, Asn119, and Thr140; these read GGTSGIG and DL. Ser174 contributes to the substrate binding site. The active-site Proton acceptor is Tyr196. An interaction with calmodulin region spans residues 301 to 317; that stretch reads DTTLADKLWDFSIKLVD.

The protein belongs to the short-chain dehydrogenases/reductases (SDR) family. Part of the Tic complex.

It is found in the plastid. It localises to the chloroplast inner membrane. Involved in protein precursor import into chloroplasts. This Brassica napus (Rape) protein is Short-chain dehydrogenase TIC 32 B, chloroplastic.